A 189-amino-acid polypeptide reads, in one-letter code: HGPRTase-like protein (189 aa).

It belongs to the purine/pyrimidine phosphoribosyltransferase family. Archaeal HPRT subfamily.

Its function is as follows. May catalyze a purine salvage reaction, the substrate is unknown. In Halorubrum lacusprofundi (strain ATCC 49239 / DSM 5036 / JCM 8891 / ACAM 34), this protein is HGPRTase-like protein.